The following is a 614-amino-acid chain: MSGIKKQKTENQQKSTNVVYQAHHVSRNKRGQVVGTRGGFRGCTVWLTGLSGAGKTTISFALEEYLVSHAIPCYSLDGDNVRHGLNRNLGFSPGDREENIRRIAEVAKLFADAGLVCITSFISPFAKDRENARKIHESAGLPFFEIFVDAPLNICESRDVKGLYKRARAGEIKGFTGIDSDYEKPETPERVLKTNLSTVSDCVHQVVELLQEQNIVPYTIIKDIHELFVPENKLDHVRAEAETLPSLSITKLDLQWVQVLSEGWATPLKGFMREKEYLQVMHFDTLLDDGVINMSIPIVLPVSAEDKTRLEGCSKFVLAHGGRRVAILRDAEFYEHRKEERCSRVWGTTCTKHPHIKMVMESGDWLVGGDLQVLEKIRWNDGLDQYRLTPLELKQKCKEMNADAVFAFQLRNPVHNGHALLMQDTRRRLLERGYKHPVLLLHPLGGWTKDDDVPLDWRMKQHAAVLEEGVLDPKSTIVAIFPSPMLYAGPTEVQWHCRSRMIAGANFYIVGRDPAGMPHPETKKDLYEPTHGGKVLSMAPGLTSVEIIPFRVAAYNKAKKAMDFYDPARHNEFDFISGTRMRKLAREGENPPDGFMAPKAWKVLTDYYRSLEKN.

The adenylyl-sulfate kinase stretch occupies residues 1–215 (MSGIKKQKTE…VVELLQEQNI (215 aa)). 52 to 57 (GAGKTT) is an ATP binding site. Residues 79–82 (DNVR), phenylalanine 91, 96–99 (REEN), 122–123 (IS), lysine 161, and 174–175 (GF) each bind adenosine 5'-phosphosulfate. Residues serine 197, 409–412 (QLRN), 511–515 (GRDPA), and alanine 553 contribute to the ATP site. The sulfate adenylyltransferase stretch occupies residues 224–614 (IHELFVPENK…TDYYRSLEKN (391 aa)).

It in the N-terminal section; belongs to the APS kinase family. This sequence in the C-terminal section; belongs to the sulfate adenylyltransferase family. In terms of tissue distribution, expressed in cartilage and adrenal gland.

It carries out the reaction sulfate + ATP + H(+) = adenosine 5'-phosphosulfate + diphosphate. The enzyme catalyses adenosine 5'-phosphosulfate + ATP = 3'-phosphoadenylyl sulfate + ADP + H(+). It functions in the pathway sulfur metabolism; sulfate assimilation. In terms of biological role, bifunctional enzyme with both ATP sulfurylase and APS kinase activity, which mediates two steps in the sulfate activation pathway. The first step is the transfer of a sulfate group to ATP to yield adenosine 5'-phosphosulfate (APS), and the second step is the transfer of a phosphate group from ATP to APS yielding 3'-phosphoadenylylsulfate/PAPS, the activated sulfate donor used by sulfotransferases. In mammals, PAPS is the sole source of sulfate while APS appears to only be an intermediate in the sulfate-activation pathway. Plays indirectly an important role in skeletogenesis during postnatal growth. The protein is Bifunctional 3'-phosphoadenosine 5'-phosphosulfate synthase 2 (PAPSS2) of Homo sapiens (Human).